The chain runs to 744 residues: MAADKPADQGAEKHEGTGQSSGITDQEKELSTNAFQAFTSGNYDACLQHLACLQDINKDDYKIILNTAVAEFFKSNQTTTDNLRQTLNQLKNQVHSAVEEMDGLDDVENSMLYYNQAVILYHLRQYTEAISVGEKLYQFIEPFEEKFAQAVCFLLVDLYILTYQAEKALHLLAVLEKMISQGNNNKNGKNETGNNNNKDGSNHKAESGALIEAAKSKIHQYKVRAYIQMKSLKACKREIKSVMNTAGNSAPSLFLKSNFEYLRGNYRKAVKLLNSSNIAEHPGFMKTGECLRCMFWNNLGCIHFAMSKHNLGIFYFKKALQENDNVCAQLSAGSTDPGKKFSGRPMCTLLTNKRYELLYNCGIQLLHIGRPLAAFECLIEAVQVYHANPRLWLRLAECCIAANKGTSEQETKGLPSKKGIVQSIVGQGYHRKIVLASQSIQNTVYNDGQSSAIPVASMEFAAICLRNALLLLPEEQQDPKQENGAKNSNQLGGNTESSESSETCSSKSHDGDKFIPAPPSSPLRKQELENLKCSILACSAYVALALGDNLMALNHADKLLQQPKLSGSLKFLGHLYAAEALISLDRISDAITHLNPENVTDVSLGISSNEQDQGSDKGENEAMESSGKRAPQCYPSSVNSARTVMLFNLGSAYCLRSEYDKARKCLHQAASMIHPKEVPPEAILLAVYLELQNGNTQLALQIIKRNQLLPAVKTHSEVRKKPVFQPVHPIQPIQMPAFTTVQRK.

The span at 1 to 16 (MAADKPADQGAEKHEG) shows a compositional bias: basic and acidic residues. The segment at 1–25 (MAADKPADQGAEKHEGTGQSSGITD) is disordered. An N-acetylalanine modification is found at alanine 2. Residues 74-107 (KSNQTTTDNLRQTLNQLKNQVHSAVEEMDGLDDV) adopt a coiled-coil conformation. Over residues 183–199 (NNNKNGKNETGNNNNKD) the composition is skewed to low complexity. Disordered regions lie at residues 183-204 (NNNK…SNHK), 477-521 (QDPK…PPSS), and 602-634 (VSLG…PQCY). A compositionally biased stretch (polar residues) spans 484 to 495 (GAKNSNQLGGNT). The span at 496–506 (ESSESSETCSS) shows a compositional bias: low complexity. Positions 602-612 (VSLGISSNEQD) are enriched in polar residues.

This sequence belongs to the CNOT10 family. As to quaternary structure, component of the CCR4-NOT complex; distinct complexes seem to exist that differ in the participation of probably mutually exclusive catalytic subunits. CNOT10 and CNOT11 form a subcomplex docked to the CNOT1 scaffold.

It localises to the cytoplasm. Its subcellular location is the nucleus. Component of the CCR4-NOT complex which is one of the major cellular mRNA deadenylases and is linked to various cellular processes including bulk mRNA degradation, miRNA-mediated repression, translational repression during translational initiation and general transcription regulation. Additional complex functions may be a consequence of its influence on mRNA expression. Is not required for association of CNOT7 to the CCR4-NOT complex. This is CCR4-NOT transcription complex subunit 10 (CNOT10) from Homo sapiens (Human).